A 127-amino-acid chain; its full sequence is MGKPATPRALPENEAKAVARMLRVSPQKLNLVAALIRGKKVDTALADLEFSRKRIARDVKKCLESAIANAENNHDLDVDDLVVSQAFVGKALVLKRFHARARGRGARILKPFSNLTIVVREVRAEAA.

Belongs to the universal ribosomal protein uL22 family. As to quaternary structure, part of the 50S ribosomal subunit.

This protein binds specifically to 23S rRNA; its binding is stimulated by other ribosomal proteins, e.g. L4, L17, and L20. It is important during the early stages of 50S assembly. It makes multiple contacts with different domains of the 23S rRNA in the assembled 50S subunit and ribosome. Functionally, the globular domain of the protein is located near the polypeptide exit tunnel on the outside of the subunit, while an extended beta-hairpin is found that lines the wall of the exit tunnel in the center of the 70S ribosome. This Methylorubrum populi (strain ATCC BAA-705 / NCIMB 13946 / BJ001) (Methylobacterium populi) protein is Large ribosomal subunit protein uL22.